The sequence spans 348 residues: 3-isopropylmalate dehydrogenase (348 aa).

76 to 87 (GPKWTDPNNRPE) provides a ligand contact to NAD(+). Substrate contacts are provided by Arg94, Arg104, Arg132, and Asp217. Positions 217, 241, and 245 each coordinate Mg(2+). NAD(+) is bound at residue 275-287 (GSAPDIAGKNVAN).

This sequence belongs to the isocitrate and isopropylmalate dehydrogenases family. LeuB type 1 subfamily. Homodimer. It depends on Mg(2+) as a cofactor. Requires Mn(2+) as cofactor.

Its subcellular location is the cytoplasm. The enzyme catalyses (2R,3S)-3-isopropylmalate + NAD(+) = 4-methyl-2-oxopentanoate + CO2 + NADH. It participates in amino-acid biosynthesis; L-leucine biosynthesis; L-leucine from 3-methyl-2-oxobutanoate: step 3/4. In terms of biological role, catalyzes the oxidation of 3-carboxy-2-hydroxy-4-methylpentanoate (3-isopropylmalate) to 3-carboxy-4-methyl-2-oxopentanoate. The product decarboxylates to 4-methyl-2 oxopentanoate. In Staphylococcus aureus (strain MW2), this protein is 3-isopropylmalate dehydrogenase.